The sequence spans 92 residues: Small ribosomal subunit protein uS19 (92 aa).

This sequence belongs to the universal ribosomal protein uS19 family.

Protein S19 forms a complex with S13 that binds strongly to the 16S ribosomal RNA. In Beijerinckia indica subsp. indica (strain ATCC 9039 / DSM 1715 / NCIMB 8712), this protein is Small ribosomal subunit protein uS19.